The following is a 74-amino-acid chain: ATP synthase subunit 9, mitochondrial (74 aa).

Transmembrane regions (helical) follow at residues 8 to 28 (IGAG…GNVF) and 50 to 70 (ILGF…AFLI).

It belongs to the ATPase C chain family. F-type ATPases have 2 components, CF(1) - the catalytic core - and CF(0) - the membrane proton channel. CF(1) has five subunits: alpha(3), beta(3), gamma(1), delta(1), epsilon(1). CF(0) has three main subunits: a, b and c.

It is found in the mitochondrion membrane. In terms of biological role, this protein is one of the chains of the nonenzymatic membrane component (F0) of mitochondrial ATPase. This chain is ATP synthase subunit 9, mitochondrial (ATP9), found in Triticum aestivum (Wheat).